The following is a 409-amino-acid chain: Tryptophan synthase beta chain (409 aa).

At K98 the chain carries N6-(pyridoxal phosphate)lysine.

This sequence belongs to the TrpB family. As to quaternary structure, tetramer of two alpha and two beta chains. Requires pyridoxal 5'-phosphate as cofactor.

The catalysed reaction is (1S,2R)-1-C-(indol-3-yl)glycerol 3-phosphate + L-serine = D-glyceraldehyde 3-phosphate + L-tryptophan + H2O. It functions in the pathway amino-acid biosynthesis; L-tryptophan biosynthesis; L-tryptophan from chorismate: step 5/5. Functionally, the beta subunit is responsible for the synthesis of L-tryptophan from indole and L-serine. The polypeptide is Tryptophan synthase beta chain (Jannaschia sp. (strain CCS1)).